A 320-amino-acid polypeptide reads, in one-letter code: Cytochrome f (320 aa).

A signal peptide spans 1 to 35; that stretch reads MQTRNNFSWIKEQITRSISVSLMIYIITRASISNA. Heme-binding residues include Y36, C56, C59, and H60. Residues 286–306 form a helical membrane-spanning segment; it reads VQGLLFFLASVILAQIFLVLK.

This sequence belongs to the cytochrome f family. The 4 large subunits of the cytochrome b6-f complex are cytochrome b6, subunit IV (17 kDa polypeptide, petD), cytochrome f and the Rieske protein, while the 4 small subunits are PetG, PetL, PetM and PetN. The complex functions as a dimer. Heme is required as a cofactor.

The protein localises to the plastid. Its subcellular location is the chloroplast thylakoid membrane. Functionally, component of the cytochrome b6-f complex, which mediates electron transfer between photosystem II (PSII) and photosystem I (PSI), cyclic electron flow around PSI, and state transitions. The polypeptide is Cytochrome f (Lactuca sativa (Garden lettuce)).